The primary structure comprises 301 residues: Probable alpha-L-glutamate ligase (301 aa).

The ATP-grasp domain maps to 104 to 287; that stretch reads LQLLSRKGVG…VAGRIVSFIE (184 aa). ATP is bound by residues Lys141, 178 to 179, Asp187, and 211 to 213; these read EF and RSN. Residues Asp248, Glu260, and Asn262 each coordinate Mg(2+). Mn(2+)-binding residues include Asp248, Glu260, and Asn262.

This sequence belongs to the RimK family. Requires Mg(2+) as cofactor. The cofactor is Mn(2+).

This Thioalkalivibrio sulfidiphilus (strain HL-EbGR7) protein is Probable alpha-L-glutamate ligase.